The chain runs to 286 residues: Bifunctional protein FolD (286 aa).

NADP(+) is bound by residues 165 to 167 (GRS), serine 190, and valine 231.

The protein belongs to the tetrahydrofolate dehydrogenase/cyclohydrolase family. As to quaternary structure, homodimer.

It carries out the reaction (6R)-5,10-methylene-5,6,7,8-tetrahydrofolate + NADP(+) = (6R)-5,10-methenyltetrahydrofolate + NADPH. The catalysed reaction is (6R)-5,10-methenyltetrahydrofolate + H2O = (6R)-10-formyltetrahydrofolate + H(+). The protein operates within one-carbon metabolism; tetrahydrofolate interconversion. Its function is as follows. Catalyzes the oxidation of 5,10-methylenetetrahydrofolate to 5,10-methenyltetrahydrofolate and then the hydrolysis of 5,10-methenyltetrahydrofolate to 10-formyltetrahydrofolate. This Bacillus cytotoxicus (strain DSM 22905 / CIP 110041 / 391-98 / NVH 391-98) protein is Bifunctional protein FolD.